The primary structure comprises 446 residues: Serine--tRNA ligase, mitochondrial (446 aa).

Position 251–253 (Thr-251–Glu-253) interacts with L-serine. ATP contacts are provided by residues Arg-284–Glu-286 and Val-300. Glu-307 contributes to the L-serine binding site. An ATP-binding site is contributed by Glu-371–Ser-374. Thr-407 contacts L-serine.

It belongs to the class-II aminoacyl-tRNA synthetase family. Type-1 seryl-tRNA synthetase subfamily. In terms of assembly, homodimer. The tRNA molecule binds across the dimer.

The protein resides in the mitochondrion matrix. It catalyses the reaction tRNA(Ser) + L-serine + ATP = L-seryl-tRNA(Ser) + AMP + diphosphate + H(+). Its function is as follows. Catalyzes the attachment of serine to tRNA(Ser). The protein is Serine--tRNA ligase, mitochondrial (DIA4) of Saccharomyces cerevisiae (strain ATCC 204508 / S288c) (Baker's yeast).